Here is a 292-residue protein sequence, read N- to C-terminus: tRNA dimethylallyltransferase (292 aa).

5–12 (APTGAGKT) serves as a coordination point for ATP. 7-12 (TGAGKT) serves as a coordination point for substrate. The segment at 29–32 (DSRQ) is interaction with substrate tRNA.

This sequence belongs to the IPP transferase family. Monomer. Mg(2+) is required as a cofactor.

The catalysed reaction is adenosine(37) in tRNA + dimethylallyl diphosphate = N(6)-dimethylallyladenosine(37) in tRNA + diphosphate. Functionally, catalyzes the transfer of a dimethylallyl group onto the adenine at position 37 in tRNAs that read codons beginning with uridine, leading to the formation of N6-(dimethylallyl)adenosine (i(6)A). This chain is tRNA dimethylallyltransferase, found in Leptospira borgpetersenii serovar Hardjo-bovis (strain JB197).